A 424-amino-acid polypeptide reads, in one-letter code: Glutamyl-tRNA reductase (424 aa).

Substrate contacts are provided by residues 49–52, serine 107, 112–114, and glutamine 118; these read TCNR and EPQ. The active-site Nucleophile is the cysteine 50. 187 to 192 contacts NADP(+); that stretch reads GAGETI.

This sequence belongs to the glutamyl-tRNA reductase family. As to quaternary structure, homodimer.

It catalyses the reaction (S)-4-amino-5-oxopentanoate + tRNA(Glu) + NADP(+) = L-glutamyl-tRNA(Glu) + NADPH + H(+). It participates in porphyrin-containing compound metabolism; protoporphyrin-IX biosynthesis; 5-aminolevulinate from L-glutamyl-tRNA(Glu): step 1/2. Catalyzes the NADPH-dependent reduction of glutamyl-tRNA(Glu) to glutamate 1-semialdehyde (GSA). The protein is Glutamyl-tRNA reductase of Chromohalobacter salexigens (strain ATCC BAA-138 / DSM 3043 / CIP 106854 / NCIMB 13768 / 1H11).